The following is a 203-amino-acid chain: Large ribosomal subunit protein bL25 (203 aa).

It belongs to the bacterial ribosomal protein bL25 family. CTC subfamily. Part of the 50S ribosomal subunit; part of the 5S rRNA/L5/L18/L25 subcomplex. Contacts the 5S rRNA. Binds to the 5S rRNA independently of L5 and L18.

In terms of biological role, this is one of the proteins that binds to the 5S RNA in the ribosome where it forms part of the central protuberance. The chain is Large ribosomal subunit protein bL25 from Rickettsia typhi (strain ATCC VR-144 / Wilmington).